A 153-amino-acid polypeptide reads, in one-letter code: Lipoprotein signal peptidase (153 aa).

The next 2 helical transmembrane spans lie at 61–81 and 85–105; these read YFFVILTVLVIGAALFYLVKN and SLWLVLSLILIISGGIGNFID. Catalysis depends on residues aspartate 114 and aspartate 130. The chain crosses the membrane as a helical span at residues 125 to 145; the sequence is IFNVADSYLTVGVLLLILILW.

Belongs to the peptidase A8 family.

It localises to the cell membrane. It catalyses the reaction Release of signal peptides from bacterial membrane prolipoproteins. Hydrolyzes -Xaa-Yaa-Zaa-|-(S,diacylglyceryl)Cys-, in which Xaa is hydrophobic (preferably Leu), and Yaa (Ala or Ser) and Zaa (Gly or Ala) have small, neutral side chains.. Its pathway is protein modification; lipoprotein biosynthesis (signal peptide cleavage). Functionally, this protein specifically catalyzes the removal of signal peptides from prolipoproteins. This chain is Lipoprotein signal peptidase, found in Streptococcus thermophilus (strain CNRZ 1066).